A 20-amino-acid polypeptide reads, in one-letter code: Unknown protein NF045 from 2D-PAGE (20 aa).

The sequence is that of Unknown protein NF045 from 2D-PAGE from Naegleria fowleri (Brain eating amoeba).